We begin with the raw amino-acid sequence, 335 residues long: Phospho-N-acetylmuramoyl-pentapeptide-transferase (335 aa).

The next 10 membrane-spanning stretches (helical) occupy residues 5–25, 50–70, 78–98, 114–133, 145–165, 177–197, 200–220, 236–256, 262–282, and 311–331; these read IFLAAALALMITLILGPLMIP, TPTMGGIIFLVGIVVSALIMA, MVMVISAMLGYGLIGFIDDFI, LIGQIALALLLTWGANRYLG, IHLELGLFYYPFVSFIIVGIT, LAAGTTLFSMLSYVSIATLAA, GGGVAILAYESDLAVFAAAAV, VFMGDTGSLALGGALVGLAVL, ILLIIGGVYVVEAISVILQVF, and VVMVFWLASLLCGVLGVIAYM.

It belongs to the glycosyltransferase 4 family. MraY subfamily. The cofactor is Mg(2+).

It is found in the cell membrane. The catalysed reaction is UDP-N-acetyl-alpha-D-muramoyl-L-alanyl-gamma-D-glutamyl-meso-2,6-diaminopimeloyl-D-alanyl-D-alanine + di-trans,octa-cis-undecaprenyl phosphate = di-trans,octa-cis-undecaprenyl diphospho-N-acetyl-alpha-D-muramoyl-L-alanyl-D-glutamyl-meso-2,6-diaminopimeloyl-D-alanyl-D-alanine + UMP. It functions in the pathway cell wall biogenesis; peptidoglycan biosynthesis. Catalyzes the initial step of the lipid cycle reactions in the biosynthesis of the cell wall peptidoglycan: transfers peptidoglycan precursor phospho-MurNAc-pentapeptide from UDP-MurNAc-pentapeptide onto the lipid carrier undecaprenyl phosphate, yielding undecaprenyl-pyrophosphoryl-MurNAc-pentapeptide, known as lipid I. In Desulfitobacterium hafniense (strain DSM 10664 / DCB-2), this protein is Phospho-N-acetylmuramoyl-pentapeptide-transferase.